The chain runs to 225 residues: Endonuclease V (225 aa).

D43 and D110 together coordinate Mg(2+).

This sequence belongs to the endonuclease V family. Mg(2+) serves as cofactor.

Its subcellular location is the cytoplasm. It carries out the reaction Endonucleolytic cleavage at apurinic or apyrimidinic sites to products with a 5'-phosphate.. Functionally, DNA repair enzyme involved in the repair of deaminated bases. Selectively cleaves double-stranded DNA at the second phosphodiester bond 3' to a deoxyinosine leaving behind the intact lesion on the nicked DNA. The chain is Endonuclease V from Thermotoga neapolitana (strain ATCC 49049 / DSM 4359 / NBRC 107923 / NS-E).